The following is a 221-amino-acid chain: Peptide methionine sulfoxide reductase MsrA (221 aa).

Residue Cys-54 is part of the active site.

This sequence belongs to the MsrA Met sulfoxide reductase family.

The catalysed reaction is L-methionyl-[protein] + [thioredoxin]-disulfide + H2O = L-methionyl-(S)-S-oxide-[protein] + [thioredoxin]-dithiol. It catalyses the reaction [thioredoxin]-disulfide + L-methionine + H2O = L-methionine (S)-S-oxide + [thioredoxin]-dithiol. Its function is as follows. Has an important function as a repair enzyme for proteins that have been inactivated by oxidation. Catalyzes the reversible oxidation-reduction of methionine sulfoxide in proteins to methionine. This chain is Peptide methionine sulfoxide reductase MsrA, found in Methylobacterium sp. (strain 4-46).